The following is a 564-amino-acid chain: Adenine deaminase (564 aa).

It belongs to the metallo-dependent hydrolases superfamily. Adenine deaminase family. Mn(2+) is required as a cofactor.

It carries out the reaction adenine + H2O + H(+) = hypoxanthine + NH4(+). The chain is Adenine deaminase from Deinococcus geothermalis (strain DSM 11300 / CIP 105573 / AG-3a).